We begin with the raw amino-acid sequence, 68 residues long: MAKSGDIRVTITLECTSCTQDSVYKRFPGISRYTTRKNRRNTPIRLESNKFCPYCYKHTIHGEIKKRD.

This sequence belongs to the bacterial ribosomal protein bL33 family.

The protein resides in the plastid. Its subcellular location is the chloroplast. In Pinus koraiensis (Korean pine), this protein is Large ribosomal subunit protein bL33c.